The following is a 209-amino-acid chain: Large ribosomal subunit protein uL3 (209 aa).

The interval 122-152 (AIKRHGQSRGPMSHGSRYHRRPGSMGPVDPN) is disordered.

The protein belongs to the universal ribosomal protein uL3 family. In terms of assembly, part of the 50S ribosomal subunit. Forms a cluster with proteins L14 and L19. Interacts with RNA helicase CshA.

Functionally, one of the primary rRNA binding proteins, it binds directly near the 3'-end of the 23S rRNA, where it nucleates assembly of the 50S subunit. Strongly stimulates 23S rRNA precursor processing by mini-ribonuclease 3 (MrnC); 20-30% DMSO can replace L3, suggesting the protein may alter rRNA conformation. In Bacillus subtilis (strain 168), this protein is Large ribosomal subunit protein uL3.